We begin with the raw amino-acid sequence, 177 residues long: Large ribosomal subunit protein uL6 (177 aa).

It belongs to the universal ribosomal protein uL6 family. As to quaternary structure, part of the 50S ribosomal subunit.

This protein binds to the 23S rRNA, and is important in its secondary structure. It is located near the subunit interface in the base of the L7/L12 stalk, and near the tRNA binding site of the peptidyltransferase center. This is Large ribosomal subunit protein uL6 from Rickettsia rickettsii (strain Iowa).